A 567-amino-acid polypeptide reads, in one-letter code: Urease subunit alpha (567 aa).

Residues 129–567 form the Urease domain; that stretch reads GGIDSHIHFI…LPLAQRYFLF (439 aa). Ni(2+) is bound by residues His-134, His-136, and Lys-217. At Lys-217 the chain carries N6-carboxylysine. A substrate-binding site is contributed by His-219. Ni(2+) contacts are provided by His-246 and His-272. The active-site Proton donor is the His-320. Asp-360 contributes to the Ni(2+) binding site.

The protein belongs to the metallo-dependent hydrolases superfamily. Urease alpha subunit family. Heterotrimer of UreA (gamma), UreB (beta) and UreC (alpha) subunits. Three heterotrimers associate to form the active enzyme. The cofactor is Ni cation. Carboxylation allows a single lysine to coordinate two nickel ions.

It localises to the cytoplasm. The enzyme catalyses urea + 2 H2O + H(+) = hydrogencarbonate + 2 NH4(+). It functions in the pathway nitrogen metabolism; urea degradation; CO(2) and NH(3) from urea (urease route): step 1/1. This Pseudomonas entomophila (strain L48) protein is Urease subunit alpha.